The chain runs to 351 residues: Type II methyltransferase M.DsaV (351 aa).

The 307-residue stretch at 6 to 312 (LKFIDLFAGI…QKMLSYIDLT (307 aa)) folds into the SAM-dependent MTase C5-type domain. C75 is a catalytic residue.

The protein belongs to the class I-like SAM-binding methyltransferase superfamily. C5-methyltransferase family.

The enzyme catalyses a 2'-deoxycytidine in DNA + S-adenosyl-L-methionine = a 5-methyl-2'-deoxycytidine in DNA + S-adenosyl-L-homocysteine + H(+). Its function is as follows. A methylase, recognizes the double-stranded sequence 5'-CCNGG-3', methylates C-2 on both strands, and protects the DNA from cleavage by the DsaV endonuclease. The polypeptide is Type II methyltransferase M.DsaV (Dactylococcopsis salina (Myxobaktron salinum)).